The chain runs to 240 residues: UPF0502 protein Veis_2102 (240 aa).

This sequence belongs to the UPF0502 family.

This Verminephrobacter eiseniae (strain EF01-2) protein is UPF0502 protein Veis_2102.